The chain runs to 101 residues: NAD(P)H-quinone oxidoreductase subunit 4L, chloroplastic (101 aa).

Helical transmembrane passes span 2–22, 32–52, and 61–81; these read ILEHVLVLSAYLFFIGLYGLI, MCLELILNAVNMNFVTFSDFF, and IFCIFVIAIAAAEAAIGLAIV.

Belongs to the complex I subunit 4L family. In terms of assembly, NDH is composed of at least 16 different subunits, 5 of which are encoded in the nucleus.

It localises to the plastid. It is found in the chloroplast thylakoid membrane. The enzyme catalyses a plastoquinone + NADH + (n+1) H(+)(in) = a plastoquinol + NAD(+) + n H(+)(out). The catalysed reaction is a plastoquinone + NADPH + (n+1) H(+)(in) = a plastoquinol + NADP(+) + n H(+)(out). Its function is as follows. NDH shuttles electrons from NAD(P)H:plastoquinone, via FMN and iron-sulfur (Fe-S) centers, to quinones in the photosynthetic chain and possibly in a chloroplast respiratory chain. The immediate electron acceptor for the enzyme in this species is believed to be plastoquinone. Couples the redox reaction to proton translocation, and thus conserves the redox energy in a proton gradient. The polypeptide is NAD(P)H-quinone oxidoreductase subunit 4L, chloroplastic (Aethionema cordifolium (Lebanon stonecress)).